A 221-amino-acid polypeptide reads, in one-letter code: Glutathione S-transferase (221 aa).

A GST N-terminal domain is found at 3–83 (GKPVLHYANT…YIAGKYNLYG (81 aa)). Residues tyrosine 9, lysine 45, 54–55 (QV), and 67–68 (QT) contribute to the glutathione site. The 124-residue stretch at 85–208 (DLKERALIDM…QPGSQRKPRL (124 aa)) folds into the GST C-terminal domain.

Belongs to the GST superfamily. Alpha family. In terms of assembly, homodimer or heterodimer of GSTA1 and GSTA2.

It carries out the reaction RX + glutathione = an S-substituted glutathione + a halide anion + H(+). It catalyses the reaction prostaglandin A2 + glutathione = prostaglandin A2-S-(R)-glutathione. The enzyme catalyses prostaglandin J2 + glutathione = prostaglandin J2-S-(R)-glutathione. The catalysed reaction is (13S)-hydroperoxy-(9Z,11E)-octadecadienoate + 2 glutathione = (13S)-hydroxy-(9Z,11E)-octadecadienoate + glutathione disulfide + H2O. It carries out the reaction androst-5-ene-3,17-dione = androst-4-ene-3,17-dione. Its function is as follows. Glutathione S-transferase that catalyzes the nucleophilic attack of the sulfur atom of glutathione on the electrophilic groups of a wide range of exogenous and endogenous compounds. Involved in the formation of glutathione conjugates of both prostaglandin A2 (PGA2) and prostaglandin J2 (PGJ2). It also catalyzes the isomerization of D5-androstene-3,17-dione (AD) into D4-androstene-3,17-dione and may therefore play an important role in hormone biosynthesis. Through its glutathione-dependent peroxidase activity toward the fatty acid hydroperoxide (13S)-hydroperoxy-(9Z,11E)-octadecadienoate/13-HPODE it is also involved in the metabolism of oxidized linoleic acid. The sequence is that of Glutathione S-transferase from Gallus gallus (Chicken).